The chain runs to 92 residues: Small ribosomal subunit protein uS19 (92 aa).

Belongs to the universal ribosomal protein uS19 family.

Functionally, protein S19 forms a complex with S13 that binds strongly to the 16S ribosomal RNA. This chain is Small ribosomal subunit protein uS19, found in Acholeplasma laidlawii (strain PG-8A).